Consider the following 54-residue polypeptide: MARNDIRPIIKLKSTAGTGYTYVTRKNKRNNPDRITLKKYDPVARKHVEFREER.

This sequence belongs to the bacterial ribosomal protein bL33 family.

In Corynebacterium urealyticum (strain ATCC 43042 / DSM 7109), this protein is Large ribosomal subunit protein bL33.